Here is a 371-residue protein sequence, read N- to C-terminus: Flagellar P-ring protein 1 (371 aa).

Positions 1-19 are cleaved as a signal peptide; the sequence is MRRALLLAALLACAPPAFA.

Belongs to the FlgI family. In terms of assembly, the basal body constitutes a major portion of the flagellar organelle and consists of four rings (L,P,S, and M) mounted on a central rod.

Its subcellular location is the periplasm. It is found in the bacterial flagellum basal body. Assembles around the rod to form the L-ring and probably protects the motor/basal body from shearing forces during rotation. This is Flagellar P-ring protein 1 from Cereibacter sphaeroides (strain ATCC 17023 / DSM 158 / JCM 6121 / CCUG 31486 / LMG 2827 / NBRC 12203 / NCIMB 8253 / ATH 2.4.1.) (Rhodobacter sphaeroides).